Here is a 230-residue protein sequence, read N- to C-terminus: Leucyl/phenylalanyl-tRNA--protein transferase (230 aa).

The protein belongs to the L/F-transferase family.

It is found in the cytoplasm. The enzyme catalyses N-terminal L-lysyl-[protein] + L-leucyl-tRNA(Leu) = N-terminal L-leucyl-L-lysyl-[protein] + tRNA(Leu) + H(+). It carries out the reaction N-terminal L-arginyl-[protein] + L-leucyl-tRNA(Leu) = N-terminal L-leucyl-L-arginyl-[protein] + tRNA(Leu) + H(+). It catalyses the reaction L-phenylalanyl-tRNA(Phe) + an N-terminal L-alpha-aminoacyl-[protein] = an N-terminal L-phenylalanyl-L-alpha-aminoacyl-[protein] + tRNA(Phe). Functions in the N-end rule pathway of protein degradation where it conjugates Leu, Phe and, less efficiently, Met from aminoacyl-tRNAs to the N-termini of proteins containing an N-terminal arginine or lysine. The polypeptide is Leucyl/phenylalanyl-tRNA--protein transferase (Hamiltonella defensa subsp. Acyrthosiphon pisum (strain 5AT)).